A 362-amino-acid polypeptide reads, in one-letter code: 3-dehydroquinate synthase (362 aa).

NAD(+) is bound by residues 71 to 76 (DGERYK), 105 to 109 (GVIGD), 129 to 130 (TT), lysine 142, lysine 151, and 169 to 172 (CLKT). Positions 184, 247, and 264 each coordinate Zn(2+).

It belongs to the sugar phosphate cyclases superfamily. Dehydroquinate synthase family. It depends on Co(2+) as a cofactor. Requires Zn(2+) as cofactor. NAD(+) is required as a cofactor.

Its subcellular location is the cytoplasm. It catalyses the reaction 7-phospho-2-dehydro-3-deoxy-D-arabino-heptonate = 3-dehydroquinate + phosphate. The protein operates within metabolic intermediate biosynthesis; chorismate biosynthesis; chorismate from D-erythrose 4-phosphate and phosphoenolpyruvate: step 2/7. Its function is as follows. Catalyzes the conversion of 3-deoxy-D-arabino-heptulosonate 7-phosphate (DAHP) to dehydroquinate (DHQ). The protein is 3-dehydroquinate synthase of Salmonella arizonae (strain ATCC BAA-731 / CDC346-86 / RSK2980).